Here is a 348-residue protein sequence, read N- to C-terminus: Haptoglobin-related protein (348 aa).

The segment at residues 1-18 (MSDLGAVISLLLWGRQLF) is a signal peptide (not cleaved). The Sushi domain maps to 34 to 87 (FPKPPEIANGYVEHLFRYQCKNYYRLRTEGDGVYTLNDKKQWINKAVGDKLPEC). The region spanning 104–346 (ILGGHLDAKG…IQHWVQKTIA (243 aa)) is the Peptidase S1 domain. Disulfide bonds link cysteine 251–cysteine 282 and cysteine 293–cysteine 323.

The protein belongs to the peptidase S1 family. In terms of tissue distribution, in adult liver the amount of HPR mRNA is at the lower limit of detection, therefore the extent of its expression is at most less than 1000-fold that of the HP1F gene. No HPR mRNA can be detected in fetal liver. Expressed in Hep-G2 and leukemia MOLT-4 cell lines.

Its subcellular location is the secreted. Its function is as follows. Primate-specific plasma protein associated with apolipoprotein L-I (apoL-I)-containing high-density lipoprotein (HDL). This HDL particle, termed trypanosome lytic factor-1 (TLF-1), mediates human innate immune protection against many species of African trypanosomes. Binds hemoglobin with high affinity and may contribute to the clearance of cell-free hemoglobin to allow hepatic recycling of heme iron. The protein is Haptoglobin-related protein (HPR) of Homo sapiens (Human).